A 186-amino-acid polypeptide reads, in one-letter code: MRHGSIPGTRGHVRPLALLGDPVLHAPCEEVTDHGPELARLVEDMFATMYAANGVGLAANQIGVPLRVFVYDCPDDEDVRHVGHVVNPRLIEADGVVLRGPEGCLSLPGLEAGTERYDRAVVEGFTTDGEPVRVLGTGWFARCLQHECDHLDGGVYVDRVSGWRHRRVMRQAARAPWNRQRAPEPR.

2 residues coordinate Fe cation: Cys104 and His146. Glu147 is a catalytic residue. His150 is a binding site for Fe cation.

The protein belongs to the polypeptide deformylase family. The cofactor is Fe(2+).

The enzyme catalyses N-terminal N-formyl-L-methionyl-[peptide] + H2O = N-terminal L-methionyl-[peptide] + formate. Removes the formyl group from the N-terminal Met of newly synthesized proteins. Requires at least a dipeptide for an efficient rate of reaction. N-terminal L-methionine is a prerequisite for activity but the enzyme has broad specificity at other positions. The polypeptide is Peptide deformylase 2 (Streptomyces avermitilis (strain ATCC 31267 / DSM 46492 / JCM 5070 / NBRC 14893 / NCIMB 12804 / NRRL 8165 / MA-4680)).